The chain runs to 352 residues: Isopentenyl-diphosphate delta-isomerase (352 aa).

Substrate is bound at residue 6–7 (RK). FMN is bound by residues 63–65 (AMT), Ser-93, and Asn-122. Substrate is bound at residue 93–95 (SQR). Position 160 (Gln-160) interacts with substrate. Position 161 (Glu-161) interacts with Mg(2+). FMN-binding positions include Lys-192, Thr-221, 271–273 (GIR), and 292–293 (SQ).

This sequence belongs to the IPP isomerase type 2 family. Homooctamer. Dimer of tetramers. The cofactor is FMN. It depends on NADPH as a cofactor. Mg(2+) is required as a cofactor.

It is found in the cytoplasm. It catalyses the reaction isopentenyl diphosphate = dimethylallyl diphosphate. Functionally, involved in the biosynthesis of isoprenoids. Catalyzes the 1,3-allylic rearrangement of the homoallylic substrate isopentenyl (IPP) to its allylic isomer, dimethylallyl diphosphate (DMAPP). This is Isopentenyl-diphosphate delta-isomerase from Pyrobaculum aerophilum (strain ATCC 51768 / DSM 7523 / JCM 9630 / CIP 104966 / NBRC 100827 / IM2).